The following is a 254-amino-acid chain: NAD kinase (254 aa).

The active-site Proton acceptor is Asp44. NAD(+) is bound by residues 44-45 (DG), 114-115 (NE), Asp144, Ala152, 155-160 (TAYNYS), and Ala179.

It belongs to the NAD kinase family. The cofactor is a divalent metal cation.

It is found in the cytoplasm. The enzyme catalyses NAD(+) + ATP = ADP + NADP(+) + H(+). Involved in the regulation of the intracellular balance of NAD and NADP, and is a key enzyme in the biosynthesis of NADP. Catalyzes specifically the phosphorylation on 2'-hydroxyl of the adenosine moiety of NAD to yield NADP. This is NAD kinase from Cereibacter sphaeroides (strain ATCC 17023 / DSM 158 / JCM 6121 / CCUG 31486 / LMG 2827 / NBRC 12203 / NCIMB 8253 / ATH 2.4.1.) (Rhodobacter sphaeroides).